A 234-amino-acid chain; its full sequence is UPF0173 metal-dependent hydrolase Smed_0942 (234 aa).

Belongs to the UPF0173 family.

This chain is UPF0173 metal-dependent hydrolase Smed_0942, found in Sinorhizobium medicae (strain WSM419) (Ensifer medicae).